The sequence spans 206 residues: Small ribosomal subunit protein uS4 (206 aa).

In terms of domain architecture, S4 RNA-binding spans 96–156 (GRLDNVVYRM…EKSKKQARIK (61 aa)).

This sequence belongs to the universal ribosomal protein uS4 family. Part of the 30S ribosomal subunit. Contacts protein S5. The interaction surface between S4 and S5 is involved in control of translational fidelity.

In terms of biological role, one of the primary rRNA binding proteins, it binds directly to 16S rRNA where it nucleates assembly of the body of the 30S subunit. Functionally, with S5 and S12 plays an important role in translational accuracy. The sequence is that of Small ribosomal subunit protein uS4 from Glaesserella parasuis serovar 5 (strain SH0165) (Haemophilus parasuis).